Here is a 147-residue protein sequence, read N- to C-terminus: Large ribosomal subunit protein uL13 (147 aa).

The disordered stretch occupies residues 128–147 (DQHPHGAQQPQPFEITQVAQ).

Belongs to the universal ribosomal protein uL13 family. In terms of assembly, part of the 50S ribosomal subunit.

In terms of biological role, this protein is one of the early assembly proteins of the 50S ribosomal subunit, although it is not seen to bind rRNA by itself. It is important during the early stages of 50S assembly. This chain is Large ribosomal subunit protein uL13, found in Streptomyces coelicolor (strain ATCC BAA-471 / A3(2) / M145).